The primary structure comprises 170 residues: Calcineurin subunit B type 2 (170 aa).

Residue G2 is the site of N-myristoyl glycine attachment. EF-hand domains lie at 18 to 46, 50 to 85, 87 to 122, and 128 to 163; these read DEIK…FTSM, QENP…FSVR, DEEQ…MVGD, and QLQQ…LEIH. Ca(2+) is bound by residues D63, D65, D67, Q69, E74, D100, D102, D104, Y106, and E111. The calcineurin A binding stretch occupies residues 131 to 136; sequence QLVDKT. Residues D141, D143, D145, K147, and E152 each coordinate Ca(2+).

The protein belongs to the calcineurin regulatory subunit family. In terms of assembly, forms a complex composed of a calmodulin-dependent catalytic subunit (also known as calcineurin A) and a regulatory Ca(2+)-binding subunit (also known as calcineurin B). There are three catalytic subunits, each encoded by a separate gene (PPP3CA, PPP3CB, and PPP3CC) and two regulatory subunits which are also encoded by separate genes (PPP3R1 and PPP3R2). Interacts with SPATA33 (via PQIIIT motif).

The protein resides in the mitochondrion. Regulatory subunit of calcineurin, a calcium-dependent, calmodulin stimulated protein phosphatase. Confers calcium sensitivity. This chain is Calcineurin subunit B type 2 (PPP3R2), found in Bos taurus (Bovine).